The following is a 239-amino-acid chain: Pre-mRNA-splicing factor isy1 (239 aa).

This sequence belongs to the ISY1 family. Associated with the spliceosome.

It is found in the cytoplasm. The protein resides in the nucleus. In terms of biological role, involved in pre-mRNA splicing. The sequence is that of Pre-mRNA-splicing factor isy1 (msp-7) from Neurospora crassa (strain ATCC 24698 / 74-OR23-1A / CBS 708.71 / DSM 1257 / FGSC 987).